The primary structure comprises 247 residues: Transmembrane protein 33 (247 aa).

Residue A2 is modified to N-acetylalanine. Residues 2 to 31 (ADTTPNGPQGAGAVQFMMTNKLDTAMWLSR) lie on the Lumenal side of the membrane. A helical transmembrane segment spans residues 32 to 52 (LFTVYCSALFVLPLLGLHEAA). The Cytoplasmic segment spans residues 53 to 100 (SFYQRALLANALTSALRLHQRLPHFQLSRAFLAQALLEDSCHYLLYSL). The chain crosses the membrane as a helical span at residues 101-121 (IFVNSYPVTMSIFPVLLFSLL). The Lumenal segment spans residues 122-155 (HAATYTKKVLDAKGSNSLPLLRSVLDKLSTNQQN). Residues 156–176 (ILKFIACNEIFLMPATVFMLF) form a helical membrane-spanning segment. At 177–247 (SGQGSLLQPF…FISRLAPTVA (71 aa)) the chain is on the cytoplasmic side.

Belongs to the PER33/POM33 family. As to quaternary structure, interacts with EIF2AK3. Interacts with ARL6IP1, isoform RTN1-A of RTN1, isoform RTN2-B of RTN2, isoform 3 of RTN3 and isoform 3 of RTN4. Interacts with RNF5. Interacts with RNF26. Interacts with PKD2. As to expression, highly expressed in the liver and significantly in brain, lungs and kidneys.

It is found in the endoplasmic reticulum membrane. It localises to the melanosome. The protein localises to the nucleus envelope. Functionally, acts as a regulator of the tubular endoplasmic reticulum (ER) network by modulating intracellular calcium homeostasis. Mechanistically, stimulates PKD2 calcium-dependent activity. Suppresses the RTN3/4-induced formation of the ER tubules. Positively regulates PERK-mediated and IRE1-mediated unfolded protein response signaling. Plays an essential role in VEGF-mediated release of Ca(2+) from ER stores during angiogenesis. Also plays a role in the modulation of innate immune signaling through the cGAS-STING pathway by interacting with RNF26. Participates in lipid metabolism by acting as a downstream effector of the pyruvate kinase/PKM. Forms a complex with RNF5 to facilitate polyubiquitination and subsequent degradation of SCAP on the ER membrane. The sequence is that of Transmembrane protein 33 (Tmem33) from Rattus norvegicus (Rat).